The following is a 425-amino-acid chain: MSRNLELFERGKQVIPGGVNSPVRAFGQVGGTPRFVARAEGAYFWDADGKQYLDYVGSWGPAIVGHAHPEVVKAVQDAAVGGLSFGAPTEGEVVIAEEICKLLPSVEQVRLVSSGTEATMTAIRLARGFTGRDLIVKFEGCYHGHSDSLLVKAGSGLLTFGNPSSGGVPADFTKHTLVLQYNDVEQLSRTFAEIGDKIACVILEPIAGNMNLIQPSREFVQALRQLTEKHGAVLIYDEVMTGFRVAKGCAQGLHGVTPDLTTLGKVVGGGMPLAAFGGRADIMGKIAPLGTVYQAGTLSGNPLSVAAGLATLKLIQQPGFYETLGSRTARLAQGLAEEARKAGVTLSTDSVGGMFGFYFSDKAPKSYAEATGCDIERFKRFFHAMLDEGVYFAPSAYEAGFVSAAHSEQMIESTLAAAGRAFARL.

K265 is modified (N6-(pyridoxal phosphate)lysine).

The protein belongs to the class-III pyridoxal-phosphate-dependent aminotransferase family. HemL subfamily. In terms of assembly, homodimer. Requires pyridoxal 5'-phosphate as cofactor.

The protein resides in the cytoplasm. It carries out the reaction (S)-4-amino-5-oxopentanoate = 5-aminolevulinate. Its pathway is porphyrin-containing compound metabolism; protoporphyrin-IX biosynthesis; 5-aminolevulinate from L-glutamyl-tRNA(Glu): step 2/2. The sequence is that of Glutamate-1-semialdehyde 2,1-aminomutase from Chromobacterium violaceum (strain ATCC 12472 / DSM 30191 / JCM 1249 / CCUG 213 / NBRC 12614 / NCIMB 9131 / NCTC 9757 / MK).